We begin with the raw amino-acid sequence, 98 residues long: Small ribosomal subunit protein bS20 (98 aa).

Belongs to the bacterial ribosomal protein bS20 family.

In terms of biological role, binds directly to 16S ribosomal RNA. The chain is Small ribosomal subunit protein bS20 from Parasynechococcus marenigrum (strain WH8102).